Reading from the N-terminus, the 647-residue chain is C2H2 finger domain transcription factor USV101 (647 aa).

Positions 1–10 (MSFVAPDDRA) are enriched in basic and acidic residues. The tract at residues 1–132 (MSFVAPDDRA…ATGYTPDGQP (132 aa)) is disordered. 2 stretches are compositionally biased toward polar residues: residues 27-54 (ESTS…SPNQ) and 66-84 (SSHS…STAY). Residues 97–122 (PTQQQQQQQSEQHIPSPPSSSNRPPS) show a composition bias toward low complexity. C2H2-type zinc fingers lie at residues 144 to 169 (FRCR…VRKH) and 175 to 197 (FPCH…ATVH). Residues 220–647 (QRASREQRRR…VKQQDDKKTQ (428 aa)) are disordered. Residues 222 to 248 (ASREQRRRGEVVEVPKGAVERRRETRK) show a composition bias toward basic and acidic residues. Positions 249 to 259 (AQAAAAQAAAA) are enriched in low complexity. The span at 261–278 (GHSQQNSPYAQYHESQWN) shows a compositional bias: polar residues. 3 stretches are compositionally biased toward low complexity: residues 312–327 (SSSA…YDSA), 404–414 (HGAYPPHDAAA), and 421–434 (GYYH…GSYP). Residues 504 to 515 (RAEDDFGKDDRK) are compositionally biased toward basic and acidic residues. Residues 521 to 540 (SPSNSQVPDSSTAAHANGAH) show a composition bias toward low complexity. Residues 628 to 647 (VDKEREKKEEVKQQDDKKTQ) show a composition bias toward basic and acidic residues.

The protein localises to the nucleus. It localises to the cytoplasm. Transcription factor that promotes pheromone gene expression, which results in a subsequent increase in cell fusion. Also promotes production of melanin and capsule and thereby is required for full virulence. In Cryptococcus neoformans var. grubii serotype A (strain H99 / ATCC 208821 / CBS 10515 / FGSC 9487) (Filobasidiella neoformans var. grubii), this protein is C2H2 finger domain transcription factor USV101.